We begin with the raw amino-acid sequence, 107 residues long: MKELDLSQISLLIDFYGNLLTDKQLQNLIDYYFNDLSLSEIAANNNVSRTAIHDSIKKSKNELEQFENKLKFIYRFNLRKEIYKQIKDNNLLDQLLETEVEQLWKTK.

It belongs to the UPF0122 family.

Its function is as follows. Might take part in the signal recognition particle (SRP) pathway. This is inferred from the conservation of its genetic proximity to ftsY/ffh. May be a regulatory protein. The protein is UPF0122 protein MYPE4850 of Malacoplasma penetrans (strain HF-2) (Mycoplasma penetrans).